We begin with the raw amino-acid sequence, 320 residues long: Cytochrome f (320 aa).

The signal sequence occupies residues 1–35; the sequence is MQTRNTFSWIREEITRSISVSLMIYIITWASISGA. Positions 36, 56, 59, and 60 each coordinate heme. A helical transmembrane segment spans residues 286-306; that stretch reads VQGLLFFLGSVVLAQIFLVLK.

This sequence belongs to the cytochrome f family. The 4 large subunits of the cytochrome b6-f complex are cytochrome b6, subunit IV (17 kDa polypeptide, petD), cytochrome f and the Rieske protein, while the 4 small subunits are PetG, PetL, PetM and PetN. The complex functions as a dimer. Requires heme as cofactor.

It localises to the plastid. The protein resides in the chloroplast thylakoid membrane. In terms of biological role, component of the cytochrome b6-f complex, which mediates electron transfer between photosystem II (PSII) and photosystem I (PSI), cyclic electron flow around PSI, and state transitions. This is Cytochrome f from Capsella bursa-pastoris (Shepherd's purse).